A 214-amino-acid chain; its full sequence is Large ribosomal subunit protein eL14 (214 aa).

Lysine 79 is subject to N6-acetyllysine. An N6-acetyllysine; alternate modification is found at lysine 85. Lysine 85 is subject to N6-succinyllysine; alternate. Lysine 124 is covalently cross-linked (Glycyl lysine isopeptide (Lys-Gly) (interchain with G-Cter in SUMO2)). At serine 139 the chain carries Phosphoserine. A disordered region spans residues 161–214 (PAKKITTEGKKAPAQKAPAQKAAGQKAAPPPKTQKGQKAPSQKAPAPKASGKKA). Residues 170–174 (KKAPA) form a 1-1; approximate repeat. The segment at 170-189 (KKAPAQKAPAQKAAGQKAAP) is 4 X 5 AA tandem repeats of Q-K-A-[APS]-X. The span at 172 to 214 (APAQKAPAQKAAGQKAAPPPKTQKGQKAPSQKAPAPKASGKKA) shows a compositional bias: low complexity. Tandem repeats lie at residues 175 to 179 (QKAPA), 180 to 184 (QKAAG), 185 to 189 (QKAAP), 192 to 194 (KTQ), and 195 to 197 (KGQ). Residues 192–197 (KTQKGQ) are 2 X 3 AA tandem repeats of K-G-Q. Lysine 203 carries the post-translational modification N6-succinyllysine.

It belongs to the eukaryotic ribosomal protein eL14 family. Component of the large ribosomal subunit.

The protein resides in the cytoplasm. Functionally, component of the large ribosomal subunit. The ribosome is a large ribonucleoprotein complex responsible for the synthesis of proteins in the cell. This chain is Large ribosomal subunit protein eL14 (RPL14), found in Bos taurus (Bovine).